Consider the following 120-residue polypeptide: UPF0102 protein CbuK_0265 (120 aa).

This sequence belongs to the UPF0102 family.

This Coxiella burnetii (strain CbuK_Q154) (Coxiella burnetii (strain Q154)) protein is UPF0102 protein CbuK_0265.